Reading from the N-terminus, the 227-residue chain is Protein Saci_0792 (227 aa).

Residues 15-209 (DIGKQLIKIA…EINKNTDEII (195 aa)) enclose the AMMECR1 domain.

This Sulfolobus acidocaldarius (strain ATCC 33909 / DSM 639 / JCM 8929 / NBRC 15157 / NCIMB 11770) protein is Protein Saci_0792.